The primary structure comprises 152 residues: Acyl carrier protein, mitochondrial (152 aa).

One can recognise a Carrier domain in the interval 73–148 (KLINERVLLV…DIIKYVADKE (76 aa)). The residue at position 108 (serine 108) is an O-(pantetheine 4'-phosphoryl)serine.

The protein belongs to the acyl carrier protein (ACP) family. Complex I is composed of about 45 different subunits.

It localises to the mitochondrion. In terms of biological role, carrier of the growing fatty acid chain in fatty acid biosynthesis. Accessory and non-catalytic subunit of the mitochondrial membrane respiratory chain NADH dehydrogenase (Complex I), which functions in the transfer of electrons from NADH to the respiratory chain. This Drosophila melanogaster (Fruit fly) protein is Acyl carrier protein, mitochondrial.